The sequence spans 101 residues: Putative pterin-4-alpha-carbinolamine dehydratase (101 aa).

The protein belongs to the pterin-4-alpha-carbinolamine dehydratase family.

It catalyses the reaction (4aS,6R)-4a-hydroxy-L-erythro-5,6,7,8-tetrahydrobiopterin = (6R)-L-erythro-6,7-dihydrobiopterin + H2O. This is Putative pterin-4-alpha-carbinolamine dehydratase from Nitrobacter winogradskyi (strain ATCC 25391 / DSM 10237 / CIP 104748 / NCIMB 11846 / Nb-255).